The sequence spans 155 residues: uncharacterized protein (155 aa).

A signal peptide spans 1–19 (MPLSKTLVQKLQQAGMAIA).

This is an uncharacterized protein from Haemophilus influenzae (strain ATCC 51907 / DSM 11121 / KW20 / Rd).